Consider the following 484-residue polypeptide: Fumarate hydratase class II (484 aa).

Residues 1–22 (MPSILDLPIGTGATGKRKESDS) form a disordered region. Substrate is bound by residues 110 to 112 (SGT), 141 to 144 (HPND), 151 to 153 (SSN), and threonine 199. The active-site Proton donor/acceptor is the histidine 200. Residue serine 330 is part of the active site. Substrate is bound by residues serine 331 and 336-338 (KVN).

It belongs to the class-II fumarase/aspartase family. Fumarase subfamily. In terms of assembly, homotetramer.

The protein localises to the cytoplasm. The catalysed reaction is (S)-malate = fumarate + H2O. Its pathway is carbohydrate metabolism; tricarboxylic acid cycle; (S)-malate from fumarate: step 1/1. Involved in the TCA cycle. Catalyzes the stereospecific interconversion of fumarate to L-malate. This chain is Fumarate hydratase class II, found in Methanosarcina acetivorans (strain ATCC 35395 / DSM 2834 / JCM 12185 / C2A).